The chain runs to 433 residues: 5-methylthioadenosine/S-adenosylhomocysteine deaminase (433 aa).

Zn(2+) is bound by residues His67 and His69. Substrate contacts are provided by Glu96, Arg148, and His187. Residue His214 coordinates Zn(2+). Substrate is bound by residues Glu217 and Asp302. Position 302 (Asp302) interacts with Zn(2+).

This sequence belongs to the metallo-dependent hydrolases superfamily. MTA/SAH deaminase family. Zn(2+) is required as a cofactor.

The catalysed reaction is S-adenosyl-L-homocysteine + H2O + H(+) = S-inosyl-L-homocysteine + NH4(+). It catalyses the reaction S-methyl-5'-thioadenosine + H2O + H(+) = S-methyl-5'-thioinosine + NH4(+). Functionally, catalyzes the deamination of 5-methylthioadenosine and S-adenosyl-L-homocysteine into 5-methylthioinosine and S-inosyl-L-homocysteine, respectively. Is also able to deaminate adenosine. In Carboxydothermus hydrogenoformans (strain ATCC BAA-161 / DSM 6008 / Z-2901), this protein is 5-methylthioadenosine/S-adenosylhomocysteine deaminase.